A 306-amino-acid chain; its full sequence is NADH-cytochrome b5 reductase 2-B (306 aa).

A helical membrane pass occupies residues 12–32 (PLLLSSGIAVTAAAAVYFSTG). In terms of domain architecture, FAD-binding FR-type spans 53-157 (STWVDLPLVK…TGPIVKYEWK (105 aa)). 160–195 (KFDSVTLLGAGSGITPLYQLMGSILSNPEDKTKINL) serves as a coordination point for FAD.

Belongs to the flavoprotein pyridine nucleotide cytochrome reductase family. Requires FAD as cofactor.

The protein localises to the mitochondrion outer membrane. The catalysed reaction is 2 Fe(III)-[cytochrome b5] + NADH = 2 Fe(II)-[cytochrome b5] + NAD(+) + H(+). Functionally, may mediate the reduction of outer membrane cytochrome b5. In Vanderwaltozyma polyspora (strain ATCC 22028 / DSM 70294 / BCRC 21397 / CBS 2163 / NBRC 10782 / NRRL Y-8283 / UCD 57-17) (Kluyveromyces polysporus), this protein is NADH-cytochrome b5 reductase 2-B (MCR1B).